The following is a 434-amino-acid chain: tRNA dimethylallyltransferase (434 aa).

10 to 17 (GTTGAGKS) serves as a coordination point for ATP. Substrate is bound at residue 12–17 (TGAGKS). Interaction with substrate tRNA stretches follow at residues 35-38 (DSMQ) and 166-170 (RKIRR). The segment at 211–233 (SLVLMPRLDKRVDKMLSHGLVDE) is interaction with isopentenylpyrophosphate transferase. 3 interaction with substrate tRNA regions span residues 256-258 (QCI), 281-299 (RMKV…WIQS), and 291-298 (KSQKKWIQ). A Matrin-type zinc finger spans residues 380 to 416 (FVCEECLDKRGDPFTVIGEDAFNVHIKSRKHKTTVRR).

It belongs to the IPP transferase family.

Its subcellular location is the mitochondrion. The protein resides in the cytoplasm. It is found in the nucleus. The enzyme catalyses adenosine(37) in tRNA + dimethylallyl diphosphate = N(6)-dimethylallyladenosine(37) in tRNA + diphosphate. In terms of biological role, catalyzes the transfer of a dimethylallyl group onto the adenine at position 37 of both cytosolic and mitochondrial tRNAs, leading to the formation of N6-(dimethylallyl)adenosine (i(6)A). The chain is tRNA dimethylallyltransferase (tit1) from Schizosaccharomyces pombe (strain 972 / ATCC 24843) (Fission yeast).